The following is a 795-amino-acid chain: Phenylalanine--tRNA ligase beta subunit (795 aa).

The tRNA-binding domain maps to 39-148 (AGTFNGVKVG…IDAPIGMDFR (110 aa)). Positions 401 to 476 (PKPNKVALRR…RIYGYDNIPN (76 aa)) constitute a B5 domain. Asp-454, Asp-460, Glu-463, and Glu-464 together coordinate Mg(2+). The region spanning 701-794 (SKFPANRRDI…VSEKFGASLR (94 aa)) is the FDX-ACB domain.

It belongs to the phenylalanyl-tRNA synthetase beta subunit family. Type 1 subfamily. In terms of assembly, tetramer of two alpha and two beta subunits. It depends on Mg(2+) as a cofactor.

It localises to the cytoplasm. It carries out the reaction tRNA(Phe) + L-phenylalanine + ATP = L-phenylalanyl-tRNA(Phe) + AMP + diphosphate + H(+). The sequence is that of Phenylalanine--tRNA ligase beta subunit from Vibrio vulnificus (strain YJ016).